The primary structure comprises 379 residues: Glucose-1-phosphate adenylyltransferase (379 aa).

Alpha-D-glucose 1-phosphate-binding positions include G164, 179-180, and S190; that span reads EK.

It belongs to the bacterial/plant glucose-1-phosphate adenylyltransferase family. Homotetramer.

The enzyme catalyses alpha-D-glucose 1-phosphate + ATP + H(+) = ADP-alpha-D-glucose + diphosphate. The protein operates within glycan biosynthesis; glycogen biosynthesis. Its function is as follows. Involved in the biosynthesis of ADP-glucose, a building block required for the elongation reactions to produce glycogen. Catalyzes the reaction between ATP and alpha-D-glucose 1-phosphate (G1P) to produce pyrophosphate and ADP-Glc. The polypeptide is Glucose-1-phosphate adenylyltransferase (Streptococcus agalactiae serotype III (strain NEM316)).